Reading from the N-terminus, the 245-residue chain is Ribosomal RNA large subunit methyltransferase E (245 aa).

Glycine 58, tryptophan 60, aspartate 78, aspartate 96, and aspartate 123 together coordinate S-adenosyl-L-methionine. Residue lysine 163 is the Proton acceptor of the active site.

Belongs to the class I-like SAM-binding methyltransferase superfamily. RNA methyltransferase RlmE family.

The protein localises to the cytoplasm. It carries out the reaction uridine(2552) in 23S rRNA + S-adenosyl-L-methionine = 2'-O-methyluridine(2552) in 23S rRNA + S-adenosyl-L-homocysteine + H(+). Its function is as follows. Specifically methylates the uridine in position 2552 of 23S rRNA at the 2'-O position of the ribose in the fully assembled 50S ribosomal subunit. This is Ribosomal RNA large subunit methyltransferase E from Methanocaldococcus jannaschii (strain ATCC 43067 / DSM 2661 / JAL-1 / JCM 10045 / NBRC 100440) (Methanococcus jannaschii).